The primary structure comprises 805 residues: Leucine--tRNA ligase (805 aa).

The short motif at 40–51 (PYPSGQGLHVGH) is the 'HIGH' region element. A 'KMSKS' region motif is present at residues 577-581 (KMSKS). Residue lysine 580 participates in ATP binding.

Belongs to the class-I aminoacyl-tRNA synthetase family.

It is found in the cytoplasm. The catalysed reaction is tRNA(Leu) + L-leucine + ATP = L-leucyl-tRNA(Leu) + AMP + diphosphate. The sequence is that of Leucine--tRNA ligase from Pediococcus pentosaceus (strain ATCC 25745 / CCUG 21536 / LMG 10740 / 183-1w).